A 259-amino-acid chain; its full sequence is Flagellar L-ring protein (259 aa).

Residues 1–15 form the signal peptide; that stretch reads MKRISLIALVTLMSG. Cys16 is lipidated: N-palmitoyl cysteine. The S-diacylglycerol cysteine moiety is linked to residue Cys16.

The protein belongs to the FlgH family. In terms of assembly, the basal body constitutes a major portion of the flagellar organelle and consists of four rings (L,P,S, and M) mounted on a central rod.

Its subcellular location is the cell outer membrane. It is found in the bacterial flagellum basal body. In terms of biological role, assembles around the rod to form the L-ring and probably protects the motor/basal body from shearing forces during rotation. This is Flagellar L-ring protein from Vibrio vulnificus (strain YJ016).